A 309-amino-acid chain; its full sequence is Olfactory receptor 1A1 (309 aa).

Over 1–25 (MRENNQSSTLEFILLGVTGQQEQED) the chain is Extracellular. N-linked (GlcNAc...) asparagine glycosylation is present at asparagine 5. A helical transmembrane segment spans residues 26-49 (FFYILFLFIYPITLIGNLLIVLAI). The Cytoplasmic segment spans residues 50 to 57 (CSDVHLHN). The helical transmembrane segment at 58 to 79 (PMYFLLANLSLVDIFFSSVTIP) threads the bilayer. The Extracellular segment spans residues 80–100 (KMLANHLLGSKSISFGGCLTQ). A disulfide bridge links cysteine 97 with cysteine 189. Residues 101-120 (MYFMIALGNTDSYILAAMAY) traverse the membrane as a helical segment. Residues 121-139 (DRAVAISRPLHYTTIMSPR) are Cytoplasmic-facing. The helical transmembrane segment at 140–158 (SCIWLIAGSWVIGNANALP) threads the bilayer. The Extracellular segment spans residues 159-195 (HTLLTASLSFCGNQEVANFYCDITPLLKLSCSDIHFH). The chain crosses the membrane as a helical span at residues 196–218 (VKMMYLGVGIFSVPLLCIIVSYI). Residues 219-235 (RVFSTVFQVPSTKGVLK) lie on the Cytoplasmic side of the membrane. Residues 236 to 258 (AFSTCGSHLTVVSLYYGTVMGMY) traverse the membrane as a helical segment. Over 259 to 270 (FRPLTNYSLKDA) the chain is Extracellular. Asparagine 264 carries N-linked (GlcNAc...) asparagine glycosylation. Residues 271 to 290 (VITVMYTAVTPMLNPFIYSL) traverse the membrane as a helical segment. The Cytoplasmic segment spans residues 291-309 (RNRDVKAALRKLFNKRISS).

This sequence belongs to the G-protein coupled receptor 1 family.

The protein resides in the cell membrane. Its function is as follows. Odorant receptor. The protein is Olfactory receptor 1A1 (OR1A1) of Pan troglodytes (Chimpanzee).